Reading from the N-terminus, the 1080-residue chain is Zorya protein ZorD (1080 aa).

The region spanning 596 to 779 (LRSPEETAGC…WSLFDFAQPG (184 aa)) is the Helicase ATP-binding domain. The Helicase C-terminal domain occupies 904–1069 (KLNWLLKILA…DMLCATPDLS (166 aa)).

In terms of biological role, component of antiviral defense system Zorya type I, composed of ZorA, ZorB, ZorC and ZorD. Expression of Zorya type I in E.coli (strain MG1655) confers 10,000-fold resistance to phage SECphi27, 100-fold resistance to lambda, and 10-fold resistance to T7. While most T7 infected Zorya-containing cells undergo abortive infection, a minority produce viable phage progeny. These eventually accumulate to a high multiplicity of infection, leading to culture collapse by 2 hours after initial infection. ZorA and ZorB probably assemble in the cell inner membrane and exert their effect there. This may have ATPase activity. The protein is Zorya protein ZorD of Escherichia coli O139:H28 (strain E24377A / ETEC).